The following is a 195-amino-acid chain: Cysteine/O-acetylserine efflux protein (195 aa).

Over M1–S7 the chain is Periplasmic. The helical transmembrane segment at A8 to L28 threads the bilayer. The Cytoplasmic segment spans residues S29–M46. Residues S47–I67 form a helical membrane-spanning segment. Residues D68 to P69 are Periplasmic-facing. Residues A70 to I90 form a helical membrane-spanning segment. Residues A91 to P104 are Cytoplasmic-facing. Residues I105 to V125 form a helical membrane-spanning segment. At T126 to W141 the chain is on the periplasmic side. Residues V142–L162 traverse the membrane as a helical segment. The Cytoplasmic segment spans residues A163–R176. The helical transmembrane segment at Q177–F194 threads the bilayer. Residue Y195 is a topological domain, periplasmic.

It belongs to the Rht family.

Its subcellular location is the cell inner membrane. The enzyme catalyses O-acetyl-L-serine(in) = O-acetyl-L-serine(out). It catalyses the reaction L-cysteine(in) = L-cysteine(out). Exporter of O-acetylserine (OAS) and cysteine. The sequence is that of Cysteine/O-acetylserine efflux protein (eamB) from Escherichia coli O9:H4 (strain HS).